The chain runs to 162 residues: Phosphopantetheine adenylyltransferase (162 aa).

S11 is a substrate binding site. Residues 11-12 (SF) and H19 contribute to the ATP site. Positions 43, 76, and 90 each coordinate substrate. ATP-binding positions include 91-93 (GLR), E101, and 126-132 (HLYISSS).

This sequence belongs to the bacterial CoaD family. In terms of assembly, homohexamer. Mg(2+) is required as a cofactor.

The protein resides in the cytoplasm. It carries out the reaction (R)-4'-phosphopantetheine + ATP + H(+) = 3'-dephospho-CoA + diphosphate. The protein operates within cofactor biosynthesis; coenzyme A biosynthesis; CoA from (R)-pantothenate: step 4/5. In terms of biological role, reversibly transfers an adenylyl group from ATP to 4'-phosphopantetheine, yielding dephospho-CoA (dPCoA) and pyrophosphate. The sequence is that of Phosphopantetheine adenylyltransferase from Streptococcus pneumoniae (strain Taiwan19F-14).